An 88-amino-acid polypeptide reads, in one-letter code: Cell division topological specificity factor (88 aa).

It belongs to the MinE family.

In terms of biological role, prevents the cell division inhibition by proteins MinC and MinD at internal division sites while permitting inhibition at polar sites. This ensures cell division at the proper site by restricting the formation of a division septum at the midpoint of the long axis of the cell. This Salmonella agona (strain SL483) protein is Cell division topological specificity factor.